Here is a 225-residue protein sequence, read N- to C-terminus: MSGHDSGNAKRGRASFGAFVRKPVERDVVASAGEAAEQGSLEAVQAWPDDAVEVGAVVDAYGLKGWIKVATHADAGRGGDALLDARRWWLERGGERLSARILQSKTHGDTVVAHAAGVSDRDAALALRGFRVFVRREDFPELAADEFYWVDLIGLEVVNEQSVALGTVSGMIDNGVHSIMRVEYPAVGKDGQPTTDERLIPFVGVYVKTVDQAARRIVVDWEADY.

A PRC barrel domain is found at 144–225 (ADEFYWVDLI…RIVVDWEADY (82 aa)).

This sequence belongs to the RimM family. Binds ribosomal protein uS19.

Its subcellular location is the cytoplasm. Functionally, an accessory protein needed during the final step in the assembly of 30S ribosomal subunit, possibly for assembly of the head region. Essential for efficient processing of 16S rRNA. May be needed both before and after RbfA during the maturation of 16S rRNA. It has affinity for free ribosomal 30S subunits but not for 70S ribosomes. The sequence is that of Ribosome maturation factor RimM from Burkholderia ambifaria (strain MC40-6).